Reading from the N-terminus, the 228-residue chain is MDNNFKIKDLPKNERPQERLIRYGAEVLSNSELLAVILRTGTKNQNIMMLASSLIKETGGLDQLFNQSIEELTKIKGIGVTKAVQILALSELSKRFKTYKSGNEYKINTPLDVSNLVMEDMKYLKQEKLKILILNTKNIVKYIRDVFIGTLNSSIVHPREIFCEAIKKNGASIIICHNHPSGDPTPSKEDINITLRLKECGKLIGIDLLDHIIIGENKYVSMKEKGTI.

Positions 106 to 228 (KINTPLDVSN…YVSMKEKGTI (123 aa)) constitute an MPN domain. Residues histidine 177, histidine 179, and aspartate 190 each contribute to the Zn(2+) site. Positions 177 to 190 (HNHPSGDPTPSKED) match the JAMM motif motif.

The protein belongs to the UPF0758 family.

This is UPF0758 protein CLI_3057 from Clostridium botulinum (strain Langeland / NCTC 10281 / Type F).